The chain runs to 208 residues: Urease accessory protein UreE (208 aa).

The interval 145 to 165 (EGGAYSAGGHGHTHAPAATPV) is disordered.

The protein belongs to the UreE family.

The protein resides in the cytoplasm. Its function is as follows. Involved in urease metallocenter assembly. Binds nickel. Probably functions as a nickel donor during metallocenter assembly. This chain is Urease accessory protein UreE, found in Polaromonas naphthalenivorans (strain CJ2).